The following is an 880-amino-acid chain: Arginine metabolism regulation protein II (880 aa).

Residues 21 to 48 constitute a DNA-binding region (zn(2)-C6 fungal-type); sequence CWTCRGRKVKCDLRHPHCQRCEKSNLPC.

As to quaternary structure, interacts with ARG80 and MCM1.

The protein localises to the cytoplasm. The protein resides in the nucleus. With ARG80, ARG82 and MCM1, coordinates the expression of arginine anabolic and catabolic genes in response to arginine. This is Arginine metabolism regulation protein II (ARG81) from Saccharomyces cerevisiae (strain ATCC 204508 / S288c) (Baker's yeast).